Consider the following 560-residue polypeptide: Probable pectinesterase/pectinesterase inhibitor 20 (560 aa).

Residues 1 to 24 (MSQKLMFLFTLACLSSLPSPFISA) form the signal peptide. Positions 25-179 (QIPAIGNATS…TKLYGVSLAL (155 aa)) are pectinesterase inhibitor 20. Residues Asn31, Asn168, Asn251, Asn255, Asn268, Asn307, and Asn314 are each glycosylated (N-linked (GlcNAc...) asparagine). Positions 246 to 544 (VTVIQNGTGN…FTVTNFLVGE (299 aa)) are pectinesterase 20. Thr323 serves as a coordination point for substrate. Asn340 carries an N-linked (GlcNAc...) asparagine glycan. Residue Gln353 coordinates substrate. Catalysis depends on Asp376, which acts as the Proton donor; for pectinesterase activity. A disulfide bridge links Cys390 with Cys410. The Nucleophile; for pectinesterase activity role is filled by Asp397. The tract at residues 417-441 (PRKGQSNEVTAQGRTDPNQNTGTAI) is disordered. The span at 419 to 439 (KGQSNEVTAQGRTDPNQNTGT) shows a compositional bias: polar residues. A glycan (N-linked (GlcNAc...) asparagine) is linked at Asn456. Substrate is bound by residues Arg465 and Trp467. Residues Asn507, Asn528, and Asn534 are each glycosylated (N-linked (GlcNAc...) asparagine).

This sequence in the N-terminal section; belongs to the PMEI family. It in the C-terminal section; belongs to the pectinesterase family. In terms of tissue distribution, expressed in flower buds.

It localises to the secreted. The protein localises to the cell wall. The catalysed reaction is [(1-&gt;4)-alpha-D-galacturonosyl methyl ester](n) + n H2O = [(1-&gt;4)-alpha-D-galacturonosyl](n) + n methanol + n H(+). It functions in the pathway glycan metabolism; pectin degradation; 2-dehydro-3-deoxy-D-gluconate from pectin: step 1/5. In terms of biological role, acts in the modification of cell walls via demethylesterification of cell wall pectin. This Arabidopsis thaliana (Mouse-ear cress) protein is Probable pectinesterase/pectinesterase inhibitor 20 (PME20).